The sequence spans 465 residues: Probable Xaa-Pro aminopeptidase PEPP (465 aa).

Mn(2+)-binding residues include D259, D270, E395, and E435.

It belongs to the peptidase M24B family. Requires Mn(2+) as cofactor.

It catalyses the reaction Release of any N-terminal amino acid, including proline, that is linked to proline, even from a dipeptide or tripeptide.. In terms of biological role, catalyzes the removal of a penultimate prolyl residue from the N-termini of peptides. In Pyricularia oryzae (strain 70-15 / ATCC MYA-4617 / FGSC 8958) (Rice blast fungus), this protein is Probable Xaa-Pro aminopeptidase PEPP (PEPP).